Here is a 2204-residue protein sequence, read N- to C-terminus: Non-reducing polyketide synthase CTB1 (2204 aa).

An N-terminal acylcarrier protein transacylase domain (SAT) region spans residues 11 to 250 (AFGDQTYDCS…TRLPITAPYH (240 aa)). Positions 382–815 (KSPIAILAAS…GGNTCLVLED (434 aa)) constitute a Ketosynthase family 3 (KS3) domain. Residues Cys-554, His-689, and His-734 each act as for beta-ketoacyl synthase activity in the active site. The interval 923-1224 (AFTGQGSAFE…QTFASINKDK (302 aa)) is malonyl-CoA:ACP transacylase (MAT) domain. A product template (PT) domain region spans residues 1299–1619 (SSSIHKVITN…VPKRLMHYIV (321 aa)). Residues 1303–1439 (HKVITNTITA…CKIRFGSLEK (137 aa)) form an N-terminal hotdog fold region. The 314-residue stretch at 1303-1616 (HKVITNTITA…LQGVPKRLMH (314 aa)) folds into the PKS/mFAS DH domain. His-1336 functions as the Proton acceptor; for dehydratase activity in the catalytic mechanism. The segment at 1468–1616 (TYRFSKGMIY…LQGVPKRLMH (149 aa)) is C-terminal hotdog fold. Catalysis depends on Asp-1528, which acts as the Proton donor; for dehydratase activity. The segment at 1625–1674 (KASGPPTEKKGSSPPVEKKASAPVAPTRPAIQRKNASIPPPATQVTPQNK) is disordered. Over residues 1631 to 1644 (TEKKGSSPPVEKKA) the composition is skewed to basic and acidic residues. 2 Carrier domains span residues 1679-1756 (PSVS…TRLS) and 1783-1865 (DPSP…SGST). O-(pantetheine 4'-phosphoryl)serine is present on residues Ser-1716 and Ser-1824. Over residues 1864-1875 (STESFDSTTTKP) the composition is skewed to polar residues. The interval 1864–1931 (STESFDSTTT…PPKGRIPPAW (68 aa)) is disordered. Low complexity predominate over residues 1880-1895 (ATPPLTDSSASSPPSS). The segment at 1945 to 2195 (ILFLFPDGAG…SGAQMLVEHM (251 aa)) is thioesterase (TE) domain.

Pantetheine 4'-phosphate serves as cofactor.

The catalysed reaction is 6 malonyl-CoA + acetyl-CoA + 6 H(+) = nor-toralactone + 6 CO2 + 7 CoA + 2 H2O. It participates in mycotoxin biosynthesis. Its function is as follows. Polyketide synthase; part of the gene cluster that mediates the biosynthesis of cercosporin, a light-activated, non-host-selective toxin. The perylenequinone chromophore of cercosporin absorbs light energy to attain an electronically-activated triplet state and produces active oxygen species such as the hydroxyl radical, superoxide, hydrogen peroxide or singlet oxygen upon reaction with oxygen molecules. These reactive oxygen species cause damage to various cellular components including lipids, proteins and nucleic acids. The first step of cercosporin biosynthesis is performed by the polyketide synthase CTB1 which catalyzes the formation of nor-toralactone. The starter unit acyltransferase (SAT) domain of CTB1 initiates polyketide extension by the selective utilization of acetyl-CoA, which is elongated to the heptaketide in the beta-ketoacyl synthase (KS) domain by successive condensations with six malonyl units introduced by the malonyl acyltransferase (MAT) domain. The product template (PT) domain catalyzes C4-C9 and C2-C11 aldol cyclizations and dehydrations to a trihydroxynaphthalene, which is thought to be delivered to the thioesterase (TE) domain for product release. The bifunctional enzyme CTB3 then methylates nor-toralactone to toralactone before conducting an unusual oxidative aromatic ring opening. The O-methyltransferase CTB2 further methylates the nascent OH-6 of the CBT3 product, blocking further oxidation at this site before the reductase CTB6 reduces the 2-oxopropyl ketone at position C7, giving naphthalene. The FAD-dependent monooxygenase CTB5 in concert with the multicopper oxidase CTB12 are responsible for homodimerization of naphthalene with CTB7 installing the dioxepine moiety, finally producing cercosporin. The fasciclin domain-containing protein CTB11 might act with CTB5 and CTB12 whereas the roles of CTB9 and CTB10 have still to be elucidated. The chain is Non-reducing polyketide synthase CTB1 from Cercospora beticola (Sugarbeet leaf spot fungus).